Consider the following 797-residue polypeptide: Protocadherin-3 (797 aa).

The N-terminal stretch at methionine 1–alanine 30 is a signal peptide. The Extracellular portion of the chain corresponds to isoleucine 31 to leucine 691. Cadherin domains follow at residues methionine 35 to phenylalanine 133, methionine 138 to phenylalanine 242, tyrosine 247 to leucine 346, leucine 351 to phenylalanine 450, and tyrosine 455 to valine 560. Residues asparagine 169, asparagine 276, and asparagine 417 are each glycosylated (N-linked (GlcNAc...) asparagine). A glycan (N-linked (GlcNAc...) asparagine) is linked at asparagine 566. In terms of domain architecture, Cadherin 6 spans alanine 567–leucine 670. The chain crosses the membrane as a helical span at residues valine 692–valine 712. Topologically, residues arginine 713 to tyrosine 797 are cytoplasmic.

Expressed in brain.

The protein resides in the cell membrane. Functionally, potential calcium-dependent cell-adhesion protein. May be involved in the establishment and maintenance of specific neuronal connections in the brain. The chain is Protocadherin-3 (Pcdh3) from Rattus norvegicus (Rat).